The primary structure comprises 60 residues: UPF0337 protein SAV1625 (60 aa).

The segment at 18–41 is disordered; sequence VGNVTDNKELEKEGQQDKATGKAK. The span at 23 to 41 shows a compositional bias: basic and acidic residues; it reads DNKELEKEGQQDKATGKAK.

The protein belongs to the UPF0337 (CsbD) family.

This chain is UPF0337 protein SAV1625, found in Staphylococcus aureus (strain Mu50 / ATCC 700699).